We begin with the raw amino-acid sequence, 613 residues long: Coiled-coil domain-containing protein 116 (613 aa).

The interval 41–68 (KPGRVPHPPSTCGSSALQGQRRNKRHPQ) is disordered. The segment covering 51–60 (TCGSSALQGQ) has biased composition (polar residues). Residues 79-104 (ESQVLDSLETVVEKATERMAAMKTEA) are a coiled coil. Disordered stretches follow at residues 329-395 (CRDG…AQVA), 509-541 (RQAS…QATE), and 565-613 (MSAC…EDGV). Serine 386 is modified (phosphoserine). Residues 512-539 (SRLSTSHCSTETPSVQQEPATHTAQDQA) are compositionally biased toward polar residues. Residues 577 to 589 (KSKDMDNEGRDKA) show a composition bias toward basic and acidic residues. A compositionally biased stretch (acidic residues) spans 590-613 (EIEDEDEDEFKDEDQDEDKDEDGV).

The protein localises to the cytoplasm. It localises to the cytoskeleton. The protein resides in the microtubule organizing center. Its subcellular location is the centrosome. The sequence is that of Coiled-coil domain-containing protein 116 (CCDC116) from Homo sapiens (Human).